The chain runs to 287 residues: Acetylglutamate kinase (287 aa).

Residues 64–65 (GG), R86, and N185 each bind substrate.

It belongs to the acetylglutamate kinase family. ArgB subfamily.

The protein localises to the cytoplasm. It catalyses the reaction N-acetyl-L-glutamate + ATP = N-acetyl-L-glutamyl 5-phosphate + ADP. It participates in amino-acid biosynthesis; L-arginine biosynthesis; N(2)-acetyl-L-ornithine from L-glutamate: step 2/4. Functionally, catalyzes the ATP-dependent phosphorylation of N-acetyl-L-glutamate. The protein is Acetylglutamate kinase of Hydrogenobaculum sp. (strain Y04AAS1).